Reading from the N-terminus, the 522-residue chain is Glucose-1-phosphate adenylyltransferase large subunit 1, chloroplastic (522 aa).

The N-terminal 54 residues, 1–54 (MVVSADCRISLSAPSCIRSSSTGLTRHIKLGSFCNGELMGKKLNLSQLPNIRLR), are a transit peptide targeting the chloroplast. Position 428 is a phosphoserine (S428).

Belongs to the bacterial/plant glucose-1-phosphate adenylyltransferase family. Heterotetramer. Leaves.

Its subcellular location is the plastid. It localises to the chloroplast. It carries out the reaction alpha-D-glucose 1-phosphate + ATP + H(+) = ADP-alpha-D-glucose + diphosphate. It functions in the pathway glycan biosynthesis; starch biosynthesis. Its activity is regulated as follows. Activated by 3'phosphoglycerate, inhibited by orthophosphate. Allosteric regulation. Functionally, this protein plays a role in synthesis of starch. It catalyzes the synthesis of the activated glycosyl donor, ADP-glucose from Glc-1-P and ATP. The chain is Glucose-1-phosphate adenylyltransferase large subunit 1, chloroplastic (ADG2) from Arabidopsis thaliana (Mouse-ear cress).